We begin with the raw amino-acid sequence, 492 residues long: MDLADIPQQQRLMAGLALVVATVIFLKLLLSFRSGGGKKRLPPTIPGAPVVGGLVKFMRGPIPMIREQYAALGSVFTVPIITRRITFLIGPEVSAHFFKGNEAEMSQQEVYRFNVPTFGPGVVFDVDYSVRQEQFRFFTEALRANKLRSYVDQMVAEAEEYFSKWGESGTVDLKYELEHLIILTASRCLLGREVREKLFDDVSALFHDLDNGIQPISVLFPYLPIPAHKRRDKARARLAEIFATIIKSRKASGQSEEDMLQCFIDSKYKNGRPTTEGEVTGLLIAALFAGQHTSSITSTWTGAYMLRFKQYFAEAVEEQKDVMKRHGDKIDHDILAEMDVLYRCIKEALRLHPPLIMLLRQSHSDFTVTTKEGKEYDIPKGHIVATSPSFANRLPHIYKNPDSYDPDRFGPGREEDKAAGAFSYISFGGGRHGCLGEPFAYLQIKAIWTHLLRNFEFELVSPFPENDWNAMVVGIKGEVMVNYKRRKLVVDN.

The helical transmembrane segment at 12–32 (LMAGLALVVATVIFLKLLLSF) threads the bilayer. A heme-binding site is contributed by C434.

This sequence belongs to the cytochrome P450 family. Heme serves as cofactor.

Its subcellular location is the membrane. The catalysed reaction is a 14alpha-methyl steroid + 3 reduced [NADPH--hemoprotein reductase] + 3 O2 = a Delta(14) steroid + formate + 3 oxidized [NADPH--hemoprotein reductase] + 4 H2O + 4 H(+). Its pathway is steroid biosynthesis; zymosterol biosynthesis; zymosterol from lanosterol: step 1/6. Catalyzes the 14-alpha demethylation of obtusifoliol to 4 alpha-methyl-5 alpha-ergosta-8,14,24(28)-trien-3 beta-ol. The protein is Obtusifoliol 14-alpha demethylase (CYP51) of Sorghum bicolor (Sorghum).